Here is a 173-residue protein sequence, read N- to C-terminus: Shikimate kinase (173 aa).

16-21 (GSGKTT) contacts ATP. T20 serves as a coordination point for Mg(2+). 3 residues coordinate substrate: D38, R62, and G83. R120 contacts ATP. R139 is a substrate binding site. Residue R156 coordinates ATP.

It belongs to the shikimate kinase family. In terms of assembly, monomer. Requires Mg(2+) as cofactor.

It localises to the cytoplasm. It carries out the reaction shikimate + ATP = 3-phosphoshikimate + ADP + H(+). The protein operates within metabolic intermediate biosynthesis; chorismate biosynthesis; chorismate from D-erythrose 4-phosphate and phosphoenolpyruvate: step 5/7. Its function is as follows. Catalyzes the specific phosphorylation of the 3-hydroxyl group of shikimic acid using ATP as a cosubstrate. This Corynebacterium diphtheriae (strain ATCC 700971 / NCTC 13129 / Biotype gravis) protein is Shikimate kinase.